Reading from the N-terminus, the 596-residue chain is Elongation factor 4 (596 aa).

A tr-type G domain is found at 2 to 183 (KNIRNFSIIA…AIITRIPAPN (182 aa)). GTP is bound by residues 14 to 19 (DHGKST) and 130 to 133 (NKID).

The protein belongs to the TRAFAC class translation factor GTPase superfamily. Classic translation factor GTPase family. LepA subfamily.

It is found in the cell inner membrane. It carries out the reaction GTP + H2O = GDP + phosphate + H(+). Required for accurate and efficient protein synthesis under certain stress conditions. May act as a fidelity factor of the translation reaction, by catalyzing a one-codon backward translocation of tRNAs on improperly translocated ribosomes. Back-translocation proceeds from a post-translocation (POST) complex to a pre-translocation (PRE) complex, thus giving elongation factor G a second chance to translocate the tRNAs correctly. Binds to ribosomes in a GTP-dependent manner. The sequence is that of Elongation factor 4 from Campylobacter concisus (strain 13826).